The sequence spans 104 residues: Guanidinium exporter (104 aa).

Residue Met-1 is a topological domain, cytoplasmic. The chain crosses the membrane as a helical span at residues Ala-2–Gly-19. Residues Leu-20 to Arg-28 lie on the Periplasmic side of the membrane. Residues Leu-29–Tyr-48 form a helical membrane-spanning segment. At Ala-49–Pro-54 the chain is on the cytoplasmic side. The helical transmembrane segment at Ala-55–Leu-77 threads the bilayer. The Periplasmic segment spans residues Leu-78–Ser-81. The helical transmembrane segment at Ala-82–Leu-100 threads the bilayer. Topologically, residues Lys-101–Ser-104 are cytoplasmic.

This sequence belongs to the drug/metabolite transporter (DMT) superfamily. Small multidrug resistance (SMR) (TC 2.A.7.1) family. Gdx/SugE subfamily.

The protein resides in the cell inner membrane. Its function is as follows. Guanidinium ion exporter. Couples guanidinium export to the proton motive force, exchanging one guanidinium ion for two protons. The protein is Guanidinium exporter of Yersinia pestis.